Here is a 249-residue protein sequence, read N- to C-terminus: Vacuolar iron transporter 1 (249 aa).

The Cytoplasmic portion of the chain corresponds to 1-36 (MADGANDGGNPGAEEQQRLLDQHKEAHFTAGEIVRD). The helical transmembrane segment at 37–57 (IIIGVSDGLTVPFALAAGLSG) threads the bilayer. Topologically, residues 58-63 (ANASSS) are vacuolar. The helical transmembrane segment at 64-84 (IVLTAGIAEVAAGAISMGLGG) threads the bilayer. Residues 85–170 (YLAAKSEADN…PKRALQSAFT (86 aa)) lie on the Cytoplasmic side of the membrane. A cytoplasmic metal binding domain (MBD) region spans residues 90 to 165 (SEADNYAREL…LEKPDPKRAL (76 aa)). Residues E102, E105, E113, E116, M149, and E153 each coordinate Fe cation. A helical membrane pass occupies residues 171 to 191 (IAIAYVLGGLVPLIPYMFIPV). The Vacuolar segment spans residues 192–194 (ARK). Residues 195–215 (AVVASVILTLMALLIFGYAKG) traverse the membrane as a helical segment. The Cytoplasmic segment spans residues 216 to 226 (YFTDNKPFKSA). The chain crosses the membrane as a helical span at residues 227–247 (LQTALIGAIASAAAFGMAKAV). Topologically, residues 248–249 (QS) are vacuolar.

The protein belongs to the CCC1 family. As to quaternary structure, homodimer. The dimeric interaction is mediated by both the transmembrane domains (TMDs) and the cytoplasmic metal binding domain (MBD).

Its subcellular location is the vacuole membrane. It carries out the reaction Fe(2+)(in) = Fe(2+)(out). With respect to regulation, transport of iron ions is inhibited by zinc ions. Its function is as follows. Vacuolar iron transporter involved in the transfer of iron ions from the cytosol to the vacuole for intracellular iron storage. Can transport cobalt ions from the cytosol to the vacuole. This chain is Vacuolar iron transporter 1, found in Eucalyptus grandis (Flooded gum).